The sequence spans 430 residues: S-adenosylmethionine synthase (430 aa).

Histidine 14 serves as a coordination point for ATP. Aspartate 16 lines the Mg(2+) pocket. Glutamate 42 provides a ligand contact to K(+). Residues glutamate 55 and glutamine 98 each contribute to the L-methionine site. Residues 98–108 (QSPDINRGVER) are flexible loop. Residues 164–166 (DAK), 254–255 (KF), aspartate 263, 269–270 (RK), alanine 286, and lysine 290 each bind ATP. Aspartate 263 is an L-methionine binding site. An L-methionine-binding site is contributed by lysine 294.

Belongs to the AdoMet synthase family. Homotetramer; dimer of dimers. Requires Mg(2+) as cofactor. It depends on K(+) as a cofactor.

It localises to the cytoplasm. The catalysed reaction is L-methionine + ATP + H2O = S-adenosyl-L-methionine + phosphate + diphosphate. The protein operates within amino-acid biosynthesis; S-adenosyl-L-methionine biosynthesis; S-adenosyl-L-methionine from L-methionine: step 1/1. Catalyzes the formation of S-adenosylmethionine (AdoMet) from methionine and ATP. The overall synthetic reaction is composed of two sequential steps, AdoMet formation and the subsequent tripolyphosphate hydrolysis which occurs prior to release of AdoMet from the enzyme. This Bacteroides thetaiotaomicron (strain ATCC 29148 / DSM 2079 / JCM 5827 / CCUG 10774 / NCTC 10582 / VPI-5482 / E50) protein is S-adenosylmethionine synthase.